The sequence spans 457 residues: PE-PGRS family protein PE_PGRS18 (457 aa).

Positions 1 to 92 constitute a PE domain; the sequence is MSFVNVAPQL…SSTYAVAEAA (92 aa). NHL repeat units lie at residues 291 to 321, 333 to 363, 379 to 404, and 419 to 447; these read FNDP…IDPV, NGPS…IDPN, GVAV…IDPA, and PTGV…ITGE.

Belongs to the mycobacterial PE family. PGRS subfamily.

Its subcellular location is the secreted. It is found in the cell wall. Enhances mycobacterial intracellular survival, probably via altering host macrophage cytokine profiling and attenuating the cell apoptosis. Could be required for host endothelial-cell invasion. Functionally, expression in Mycobacterium smegmatis, a nonpathogenic species naturally deficient in PE_PGRS genes, results in alteration of the production of host cytokines, including IL-6, IL-1beta, IL-10 and IL-12p40, as well as enhanced survival within macrophages largely via attenuating the apoptosis of macrophages. The polypeptide is PE-PGRS family protein PE_PGRS18 (Mycobacterium tuberculosis (strain ATCC 25618 / H37Rv)).